A 442-amino-acid chain; its full sequence is 6-phospho-alpha-glucosidase 1 (442 aa).

6–72 is a binding site for NAD(+); it reads FSVLIAGGGS…PEVEFLATTD (67 aa). Residues arginine 95 and asparagine 149 each coordinate substrate. Residue cysteine 171 participates in Mn(2+) binding. Aspartate 172 serves as the catalytic Proton donor. Mn(2+) is bound at residue histidine 202. Tyrosine 265 (proton acceptor) is an active-site residue. Residue arginine 285 participates in substrate binding.

The protein belongs to the glycosyl hydrolase 4 family. In terms of assembly, homodimer. May also form homotetramer. It depends on Mn(2+) as a cofactor. Requires Co(2+) as cofactor. Ni(2+) is required as a cofactor. Fe(2+) serves as cofactor. The cofactor is Mg(2+). It depends on NAD(+) as a cofactor.

The enzyme catalyses alpha-maltose 6'-phosphate + H2O = D-glucose 6-phosphate + D-glucose. With respect to regulation, is inhibited by EDTA in vitro. Functionally, is probably involved in the catabolism of alpha-glycosides accumulated via a phosphoenolpyruvate-dependent phosphotransferase system (PEP-PTS). Hydrolyzes a wide variety of 6-phospho-alpha-D-glucosides including the five isomeric derivatives of sucrose, i.e. trehalulose-6'-phosphate, turanose-6'-phosphate, maltulose-6'-phosphate, leucrose-6'-phosphate, and palatinose-6'-phosphate, but is not active on sucrose-6-phosphate. Can also hydrolyze maltose-6'-phosphate and methyl-alpha-glucose-6-phosphate, and poorly, trehalose-6-phosphate. Fails to hydrolyze beta-O-linked phosphorylated disaccharides such as cellobiose-6'-phosphate and gentiobiose-6'-phosphate. Does not seem to be involved in maltose catabolism. The polypeptide is 6-phospho-alpha-glucosidase 1 (simA) (Lacticaseibacillus paracasei (strain ATCC 334 / BCRC 17002 / CCUG 31169 / CIP 107868 / KCTC 3260 / NRRL B-441) (Lactobacillus paracasei)).